An 819-amino-acid chain; its full sequence is Protein kinase C-binding protein NELL2 (819 aa).

The N-terminal stretch at 1–24 is a signal peptide; it reads MHAMESRVLLRTFCVILGLGAVWG. 4 N-linked (GlcNAc...) asparagine glycosylation sites follow: Asn-56, Asn-228, Asn-296, and Asn-301. Residues 67–231 form the Laminin G-like domain; sequence PRSIKASTAT…AQCPDLNRTC (165 aa). In terms of domain architecture, VWFC 1 spans 275–334; that stretch reads RTCTVKGTTYRESESWTDGCKNCTCLNGTIQCETLVCPAPDCPPKSAPAYVDGKCCKECK. Positions 400–442 constitute an EGF-like 1 domain; the sequence is GYDFCSEKHTCMENSVCRNLNDRAVCSCRDGFRALREDNAYCE. Cystine bridges form between Cys-404/Cys-416, Cys-410/Cys-425, and Cys-427/Cys-441. 3 residues coordinate Ca(2+): Asp-443, Ile-444, and Glu-446. Residues 443–484 enclose the EGF-like 2; calcium-binding domain; it reads DIDECAEGRHYCRENTMCVNTPGSFMCICKTGYIRIDDYSCT. Disulfide bonds link Cys-447/Cys-460, Cys-454/Cys-469, Cys-471/Cys-483, Cys-489/Cys-502, Cys-496/Cys-511, Cys-513/Cys-524, Cys-528/Cys-538, Cys-532/Cys-544, and Cys-546/Cys-555. 3 residues coordinate Ca(2+): Asn-462, Thr-463, and Ser-466. The EGF-like 3; calcium-binding domain maps to 485–525; sequence EHDECLTNQHNCDENALCFNTVGGHNCVCKPGYTGNGTTCK. Asn-520 carries N-linked (GlcNAc...) asparagine glycosylation. Residues 526-556 enclose the EGF-like 4 domain; the sequence is AFCKDGCRNGGACIAANVCACPQGFTGPSCE. Residue Thr-551 is glycosylated (O-linked (GlcNAc...) threonine). The Ca(2+) site is built by Asp-558, Ile-559, and Glu-561. The EGF-like 5; calcium-binding domain maps to 558 to 604; the sequence is DIDECSEGFVQCDSRANCINLPGWYHCECRDGYHDNGMFAPGGESCE. 3 disulfides stabilise this stretch: Cys-562-Cys-575, Cys-569-Cys-584, and Cys-586-Cys-603. Ca(2+)-binding residues include Asn-577, Leu-578, and Trp-581. Ca(2+)-binding residues include Asp-605, Ile-606, and Glu-608. The 36-residue stretch at 605–640 folds into the EGF-like 6; calcium-binding domain; that stretch reads DIDECGTGRHSCTNDTICFNLDGGYDCRCPHGKNCT. Cystine bridges form between Cys-609–Cys-622, Cys-616–Cys-631, and Cys-633–Cys-639. N-linked (GlcNAc...) asparagine glycosylation is present at Asn-618. Residues Asn-624, Leu-625, and Gly-628 each coordinate Ca(2+). An N-linked (GlcNAc...) asparagine glycan is attached at Asn-638. The VWFC 2 domain occupies 701 to 759; sequence SQCLHQNGETVYNSGDTWVQDCRQCRCLQGEVDCWPLACPEVECEFSVLPENECCPRCV.

In terms of assembly, homotrimer. Interacts with NICOL1; this interaction triggers epididymal differentiation. Interacts (via EGF domains) with ROBO3 (via FN domains); binding to ROBO3 induces repulsive guidance cue for commissural axons. Expressed in brain and testis but not in epididymis. Expressed in regions flanking the commissural axon trajectory, including the ventral horn.

Its subcellular location is the secreted. In terms of biological role, plays multiple roles in neural tissues, regulates neuronal proliferation, survival, differentiation, polarization, as well as axon guidance and synaptic functions. Plays an important role in axon development during neuronal differentiation through the MAPK intracellular signaling pathway. Via binding to its receptor ROBO3, plays a role in axon guidance, functioning as a repulsive axon guidance cue that contributes to commissural axon guidance to the midline. Required for neuron survival through the modulation of MAPK signaling pathways too. Involved in the regulation of hypothalamic GNRH secretion and the control of puberty. Epididymal-secreted protein that signals through a ROS1-pathway to regulate the epididymal initial segment (IS) maturation, sperm maturation and male fertility. This is Protein kinase C-binding protein NELL2 from Mus musculus (Mouse).